The chain runs to 370 residues: Vasopressin V2 receptor (370 aa).

Residues 1–28 (MLRATTSAVPRALSWPAAPGNGSEREPL) are disordered. Topologically, residues 1–37 (MLRATTSAVPRALSWPAAPGNGSEREPLDDRDPLLAR) are extracellular. N-linked (GlcNAc...) asparagine glycosylation is present at asparagine 21. Residues 38 to 62 (VELALLSTVFVAVALSNGLVLGALV) form a helical membrane-spanning segment. The Cytoplasmic portion of the chain corresponds to 63 to 76 (RRGRRGRWAPMHVF). The helical transmembrane segment at 77–97 (IGHLCLADLAVALFQVLPQLA) threads the bilayer. The Extracellular portion of the chain corresponds to 98–112 (WDATYRFRGPDALCR). The chain crosses the membrane as a helical span at residues 113–134 (AVKYLQMVGMYASSYMILAMTL). Residues 135-158 (DRHRAICRPMLAYRHGGGARWNRP) are Cytoplasmic-facing. Residues 159 to 179 (VLVAWAFSLLLSLPQLFIFAQ) form a helical membrane-spanning segment. Over 180-199 (RDVGDGSGVLDCWASFAEPW) the chain is Extracellular. The chain crosses the membrane as a helical span at residues 200–219 (GLRAYVTWIALMVFVAPALG). The Cytoplasmic segment spans residues 220 to 270 (IAACQVLIFREIHTSLVPGPAERAGGHRGGRRAGSPREGARVSAAMAKTAR). A helical membrane pass occupies residues 271–292 (MTLVIVAVYVLCWAPFFLVQLW). Over 293–307 (SVWDPKAPREGPPFV) the chain is Extracellular. The helical transmembrane segment at 308–327 (LLMLLASLNSCTNPWIYASF) threads the bilayer. Residues 328-370 (SSSISSELRSLLCCPRRRTPPSLRPQEESCATASSFSARDTSS) lie on the Cytoplasmic side of the membrane. Residues cysteine 340 and cysteine 341 are each lipidated (S-palmitoyl cysteine). The tract at residues 347 to 370 (PPSLRPQEESCATASSFSARDTSS) is disordered. Polar residues predominate over residues 356–370 (SCATASSFSARDTSS).

This sequence belongs to the G-protein coupled receptor 1 family. Vasopressin/oxytocin receptor subfamily. Interacts with ARRDC4. Identified in a complex containing at least ARRDC4, V2R and HGS. Interacts with TMEM147.

The protein localises to the cell membrane. In terms of biological role, receptor for arginine vasopressin. The activity of this receptor is mediated by G proteins which activate adenylate cyclase. Involved in renal water reabsorption. The polypeptide is Vasopressin V2 receptor (AVPR2) (Sus scrofa (Pig)).